An 818-amino-acid chain; its full sequence is Fibrous sheath CABYR-binding protein (818 aa).

Residues methionine 1–isoleucine 61 are disordered. Residues serine 25, serine 57, and serine 182 each carry the phosphoserine modification. Disordered stretches follow at residues serine 195 to threonine 727 and leucine 773 to valine 805. Low complexity-rich tracts occupy residues serine 490 to glutamate 511, glutamate 544 to glutamate 560, and alanine 697 to glutamate 715. Residues leucine 773–proline 794 are compositionally biased toward basic and acidic residues.

As to quaternary structure, interacts with CABYR. Interacts with ROPN1 and ROPN1L; the interaction increases upon spermatozoa capacitation conditions. Post-translationally, phosphorylated by PKA upon spermatozoa capacitation conditions.

Its subcellular location is the cell projection. It localises to the cilium. It is found in the flagellum. Its function is as follows. May be involved in the later stages of fibrous sheath biogenesis and spermatozoa capacitation. Inhibits ROPN1 and ROPN1L SUMOylation. Binds calcium. This is Fibrous sheath CABYR-binding protein from Bos taurus (Bovine).